The sequence spans 272 residues: Small ribosomal subunit protein uS2 (272 aa).

A disordered region spans residues 238–272 (ASKEEQTEEAEEETLSSKYREQDFQEAKSGARGEK). Positions 255–272 (KYREQDFQEAKSGARGEK) are enriched in basic and acidic residues.

It belongs to the universal ribosomal protein uS2 family.

The sequence is that of Small ribosomal subunit protein uS2 from Protochlamydia amoebophila (strain UWE25).